The sequence spans 76 residues: Conotoxin Bu28 (76 aa).

An N-terminal signal peptide occupies residues 1–24 (MTSVQSATCCCLLWLVLCVQLVTP). The propeptide occupies 25 to 39 (DSPATAQLSRHLTAR). 2 cysteine pairs are disulfide-bonded: Cys-50–Cys-63 and Cys-54–Cys-65. The residue at position 69 (Arg-69) is an Arginine amide. The propeptide occupies 71-76 (VVSSSI).

This sequence belongs to the conotoxin J superfamily. In terms of tissue distribution, expressed by the venom duct.

The protein localises to the secreted. Its function is as follows. Highly inhibits both nicotinic acetylcholine receptors (neuronal (alpha-3/beta-4) and muscular (alpha-1/beta-1/epsilon/delta) subtypes) and the voltage-gated potassium channel Kv1.6/KCNA6 subtype. The chain is Conotoxin Bu28 from Conus bullatus (Bubble cone).